Reading from the N-terminus, the 479-residue chain is 5-hydroxytryptamine receptor 7 (479 aa).

The Extracellular segment spans residues 1 to 83 (MMDVNSSGRP…INYGRVEKVV (83 aa)). N-linked (GlcNAc...) asparagine glycosylation is found at N5 and N66. The helical transmembrane segment at 84 to 108 (IGSILTLITLLTIAGNCLVVISVCF) threads the bilayer. The Cytoplasmic portion of the chain corresponds to 109–118 (VKKLRQPSNY). A helical membrane pass occupies residues 119–140 (LIVSLALADLSVAVAVMPFVSV). At 141–152 (TDLIGGKWIFGH) the chain is on the extracellular side. The chain crosses the membrane as a helical span at residues 153–178 (FFCNVFIAMDVMCCTASIMTLCVISI). An intrachain disulfide couples C155 to C231. D162 provides a ligand contact to serotonin. Residues 179 to 198 (DRYLGITRPLTYPVRQNGKC) are Cytoplasmic-facing. Residues 199-219 (MAKMILSVWLLSASITLPPLF) traverse the membrane as a helical segment. At 220 to 237 (GWAQNVNDDKVCLISQDF) the chain is on the extracellular side. The chain crosses the membrane as a helical span at residues 238–260 (GYTIYSTAVAFYIPMSVMLFMYY). The Cytoplasmic segment spans residues 261-326 (QIYKAARKSA…SIFKREQKAA (66 aa)). A helical membrane pass occupies residues 327–352 (TTLGIIVGAFTVCWLPFFLLSTARPF). Over 353–363 (ICGTSCSCIPL) the chain is Extracellular. The helical transmembrane segment at 364–387 (WVERTFLWLGYANSLINPFIYAFF) threads the bilayer. Residues 388–479 (NRDLRTTYRS…TVEKKVMIHD (92 aa)) lie on the Cytoplasmic side of the membrane. C401 carries S-palmitoyl cysteine lipidation.

The protein belongs to the G-protein coupled receptor 1 family. Predominant isoform in spleen, caudate and hippocampus. As to expression, expressed at lower levels. In terms of tissue distribution, minor isoform in terms of expression.

It localises to the cell membrane. In terms of biological role, G-protein coupled receptor for 5-hydroxytryptamine (serotonin), a biogenic hormone that functions as a neurotransmitter, a hormone and a mitogen. Ligand binding causes a conformation change that triggers signaling via guanine nucleotide-binding proteins (G proteins) and modulates the activity of downstream effectors. HTR7 is coupled to G(s) G alpha proteins and mediates activation of adenylate cyclase activity. The sequence is that of 5-hydroxytryptamine receptor 7 from Homo sapiens (Human).